The primary structure comprises 231 residues: S-norcoclaurine synthase 1 (231 aa).

107 to 109 (YKE) serves as a coordination point for dopamine. Lys121 (proton donor) is an active-site residue. Asp140 is a (4-hydroxyphenyl)acetaldehyde binding site. Residues 210-230 (LLLCLIICLVIAGGMFVAGVP) traverse the membrane as a helical segment.

It belongs to the BetVI family. Detected in roots, stems, leaves, flower buds and germinating seeds.

Its subcellular location is the membrane. It carries out the reaction (4-hydroxyphenyl)acetaldehyde + dopamine = (S)-norcoclaurine + H2O. The protein operates within alkaloid biosynthesis; (S)-reticuline biosynthesis. Its activity is regulated as follows. Activity doubles within 5 hours of elicitor treatment and continues to increase for at least 80 hours. Involved in the biosynthesis of (S)-coclaurine, the common precursor of all benzylisoquinoline alkaloids such as morphine, sanguinarine, codeine or papaverine. Condenses dopamine and 4-hydroxyphenylacetaldehyde. The sequence is that of S-norcoclaurine synthase 1 from Papaver somniferum (Opium poppy).